A 238-amino-acid polypeptide reads, in one-letter code: Uridylate kinase (238 aa).

Position 12–15 (Lys-12–Gly-15) interacts with ATP. Gly-54 is a binding site for UMP. Positions 55 and 59 each coordinate ATP. UMP-binding positions include Asp-74 and Thr-135–Thr-142. ATP-binding residues include Thr-162, Asn-163, Tyr-168, and Asp-171.

The protein belongs to the UMP kinase family. As to quaternary structure, homohexamer.

The protein localises to the cytoplasm. It catalyses the reaction UMP + ATP = UDP + ADP. It participates in pyrimidine metabolism; CTP biosynthesis via de novo pathway; UDP from UMP (UMPK route): step 1/1. With respect to regulation, inhibited by UTP. Its function is as follows. Catalyzes the reversible phosphorylation of UMP to UDP. In Rhodopseudomonas palustris (strain BisB18), this protein is Uridylate kinase.